A 297-amino-acid chain; its full sequence is Acetyl-coenzyme A carboxylase carboxyl transferase subunit beta (297 aa).

Positions 27–296 (LWHKCPSCEA…PEQAREAAAV (270 aa)) constitute a CoA carboxyltransferase N-terminal domain. Positions 31, 34, 50, and 53 each coordinate Zn(2+). The segment at 31-53 (CPSCEAVLYRPELEKTLDVCPKC) adopts a C4-type zinc-finger fold.

Belongs to the AccD/PCCB family. Acetyl-CoA carboxylase is a heterohexamer composed of biotin carboxyl carrier protein (AccB), biotin carboxylase (AccC) and two subunits each of ACCase subunit alpha (AccA) and ACCase subunit beta (AccD). The cofactor is Zn(2+).

The protein resides in the cytoplasm. The catalysed reaction is N(6)-carboxybiotinyl-L-lysyl-[protein] + acetyl-CoA = N(6)-biotinyl-L-lysyl-[protein] + malonyl-CoA. The protein operates within lipid metabolism; malonyl-CoA biosynthesis; malonyl-CoA from acetyl-CoA: step 1/1. Component of the acetyl coenzyme A carboxylase (ACC) complex. Biotin carboxylase (BC) catalyzes the carboxylation of biotin on its carrier protein (BCCP) and then the CO(2) group is transferred by the transcarboxylase to acetyl-CoA to form malonyl-CoA. In Pseudomonas putida (strain GB-1), this protein is Acetyl-coenzyme A carboxylase carboxyl transferase subunit beta.